We begin with the raw amino-acid sequence, 144 residues long: Grifin (144 aa).

The Galectin domain maps to 5-133; sequence FEAFCAGGLA…DHQLAQVELA (129 aa). Residue Ser138 is modified to Phosphoserine.

As to quaternary structure, homodimer. Lens-specific. Located at the interface between lens fiber cells (at protein level).

This Rattus norvegicus (Rat) protein is Grifin (Grifin).